Reading from the N-terminus, the 318-residue chain is D-alanine--D-alanine ligase (318 aa).

Residues 116-311 form the ATP-grasp domain; it reads KQVWQSLGIP…FQQLVLAILA (196 aa). 142–197 is an ATP binding site; that stretch reads SAELGFPLIVKPAHEGSSIGMAKVNSEQELVAAWKDAAKYDSQVLVEQWIHGPEFT. Residues aspartate 265, glutamate 278, and asparagine 280 each coordinate Mg(2+).

It belongs to the D-alanine--D-alanine ligase family. The cofactor is Mg(2+). Mn(2+) serves as cofactor.

It localises to the cytoplasm. The enzyme catalyses 2 D-alanine + ATP = D-alanyl-D-alanine + ADP + phosphate + H(+). Its pathway is cell wall biogenesis; peptidoglycan biosynthesis. Cell wall formation. This chain is D-alanine--D-alanine ligase, found in Pseudomonas entomophila (strain L48).